Here is a 269-residue protein sequence, read N- to C-terminus: Probable aquaporin TIP5-1 (269 aa).

The next 5 membrane-spanning stretches (helical) occupy residues 19–39 (AYFA…GSTI), 54–74 (SLMA…FIAA), 84–104 (AVTF…IFYW), 139–159 (FGAG…VHVA), and 177–197 (ALGA…AGSL). Residues 82 to 84 (NPA) carry the NPA 1 motif. An NPA 2 motif is present at residues 203 to 205 (NPA). A helical membrane pass occupies residues 223-243 (YWAGPMVGAAVAALVHQALVF).

The protein belongs to the MIP/aquaporin (TC 1.A.8) family. TIP (TC 1.A.8.10) subfamily. In terms of tissue distribution, expressed in leaves and anthers, and at lower levels in roots.

Its subcellular location is the vacuole membrane. Functionally, aquaporins facilitate the transport of water and small neutral solutes across cell membranes. May be involved in transport from the vacuolar compartment to the cytoplasm. The protein is Probable aquaporin TIP5-1 (TIP5;1) of Oryza sativa subsp. japonica (Rice).